The chain runs to 200 residues: Putative pseudouridine methyltransferase (200 aa).

2 residues coordinate S-adenosyl-L-methionine: Met-133 and Cys-187.

Belongs to the methyltransferase superfamily. TrmY family.

It localises to the cytoplasm. In Alcanivorax borkumensis (strain ATCC 700651 / DSM 11573 / NCIMB 13689 / SK2), this protein is Putative pseudouridine methyltransferase.